Reading from the N-terminus, the 449-residue chain is Protein tweety homolog 1-A (449 aa).

At 1–43 (MSTSHGYRASWWTNILHQVPHTNFQFEVVDNQFAPQEWPYQQA) the chain is on the extracellular side. Residues 44 to 64 (LLFLASIAGLCLAISLILICV) form a helical membrane-spanning segment. At 65–86 (YLIRFCCCASQEDDDSKNHRVC) the chain is on the cytoplasmic side. Residues 87–107 (CVTWSCVAAVIICCAGIGIGF) traverse the membrane as a helical segment. Residues 108–212 (YGNSETNDGV…QVNFIEDYRW (105 aa)) lie on the Extracellular side of the membrane. N-linked (GlcNAc...) asparagine glycosylation is present at Asn128. The helical transmembrane segment at 213 to 233 (LAYILLLLLDLIICLFTLLGL) threads the bilayer. At 234–238 (AKRIK) the chain is on the cytoplasmic side. The chain crosses the membrane as a helical span at residues 239–259 (WLVIVMTVVSFFVLLLSWGSM). Topologically, residues 260–388 (GLEMATAVGL…LKGLCYDGME (129 aa)) are extracellular. 2 cysteine pairs are disulfide-bonded: Cys273–Cys383 and Cys301–Cys368. 2 N-linked (GlcNAc...) asparagine glycosylation sites follow: Asn282 and Asn353. Residues 389–409 (GILFLLLFSFLSALSFTAAVC) traverse the membrane as a helical segment. Residues 410 to 449 (SLPRAWKRFQNRDLDYDDMDEDDPFNPQESKRFVQWQSSI) lie on the Cytoplasmic side of the membrane.

This sequence belongs to the tweety family. Homotetramer; disulfide-linked. Homodimer.

It is found in the cell membrane. The catalysed reaction is chloride(in) = chloride(out). It carries out the reaction L-glutamate(out) = L-glutamate(in). Its function is as follows. May act as a calcium-independent, swelling-dependent volume-regulated anion channel (VRAC-swell) which plays a pivotal role in the process of regulatory volume decrease (RVD) in the brain through the efflux of anions like chloride and organic osmolytes like glutamate. The polypeptide is Protein tweety homolog 1-A (ttyh1-a) (Xenopus laevis (African clawed frog)).